A 75-amino-acid polypeptide reads, in one-letter code: Protein SlyX homolog (75 aa).

This sequence belongs to the SlyX family.

The polypeptide is Protein SlyX homolog (Chromobacterium violaceum (strain ATCC 12472 / DSM 30191 / JCM 1249 / CCUG 213 / NBRC 12614 / NCIMB 9131 / NCTC 9757 / MK)).